Here is a 428-residue protein sequence, read N- to C-terminus: Serine--tRNA ligase (428 aa).

231 to 233 is an L-serine binding site; it reads TAE. An ATP-binding site is contributed by 262–264; that stretch reads RSE. L-serine is bound at residue glutamate 285. 349–352 provides a ligand contact to ATP; sequence EISS. Serine 385 is a binding site for L-serine.

This sequence belongs to the class-II aminoacyl-tRNA synthetase family. Type-1 seryl-tRNA synthetase subfamily. In terms of assembly, homodimer. The tRNA molecule binds across the dimer.

It is found in the cytoplasm. The catalysed reaction is tRNA(Ser) + L-serine + ATP = L-seryl-tRNA(Ser) + AMP + diphosphate + H(+). The enzyme catalyses tRNA(Sec) + L-serine + ATP = L-seryl-tRNA(Sec) + AMP + diphosphate + H(+). Its pathway is aminoacyl-tRNA biosynthesis; selenocysteinyl-tRNA(Sec) biosynthesis; L-seryl-tRNA(Sec) from L-serine and tRNA(Sec): step 1/1. In terms of biological role, catalyzes the attachment of serine to tRNA(Ser). Is also able to aminoacylate tRNA(Sec) with serine, to form the misacylated tRNA L-seryl-tRNA(Sec), which will be further converted into selenocysteinyl-tRNA(Sec). This is Serine--tRNA ligase from Staphylococcus haemolyticus (strain JCSC1435).